Consider the following 112-residue polypeptide: Nitrogen regulatory protein P-II (112 aa).

At Tyr-51 the chain carries O-UMP-tyrosine.

The protein belongs to the P(II) protein family. In terms of assembly, homotrimer.

In nitrogen-limiting conditions, when the ratio of Gln to 2-ketoglutarate decreases, P-II is uridylylated to P-II-UMP. P-II-UMP allows the deadenylation of glutamine synthetase (GS), thus activating the enzyme. Conversely, in nitrogen excess P-II is deuridylated and promotes the adenylation of GS. P-II indirectly controls the transcription of the GS gene (glnA). P-II prevents NR-II-catalyzed conversion of NR-I to NR-I-phosphate, the transcriptional activator of glnA. When P-II is uridylylated to P-II-UMP, these events are reversed. The chain is Nitrogen regulatory protein P-II (glnB) from Klebsiella oxytoca.